The sequence spans 1063 residues: DNA-directed RNA polymerase subunit beta (1063 aa).

It belongs to the RNA polymerase beta chain family. In terms of assembly, in plastids the minimal PEP RNA polymerase catalytic core is composed of four subunits: alpha, beta, beta', and beta''. When a (nuclear-encoded) sigma factor is associated with the core the holoenzyme is formed, which can initiate transcription.

It localises to the plastid. The protein localises to the chloroplast. It catalyses the reaction RNA(n) + a ribonucleoside 5'-triphosphate = RNA(n+1) + diphosphate. Its function is as follows. DNA-dependent RNA polymerase catalyzes the transcription of DNA into RNA using the four ribonucleoside triphosphates as substrates. This chain is DNA-directed RNA polymerase subunit beta, found in Zygnema circumcarinatum (Green alga).